The chain runs to 214 residues: Ribosomal RNA small subunit methyltransferase G (214 aa).

Residues G81, M86, 132-133 (VE), and R147 contribute to the S-adenosyl-L-methionine site.

The protein belongs to the methyltransferase superfamily. RNA methyltransferase RsmG family.

Its subcellular location is the cytoplasm. The catalysed reaction is guanosine(527) in 16S rRNA + S-adenosyl-L-methionine = N(7)-methylguanosine(527) in 16S rRNA + S-adenosyl-L-homocysteine. Its function is as follows. Specifically methylates the N7 position of guanine in position 527 of 16S rRNA. This Ectopseudomonas mendocina (strain ymp) (Pseudomonas mendocina) protein is Ribosomal RNA small subunit methyltransferase G.